A 548-amino-acid chain; its full sequence is Beta-caryophyllene synthase (548 aa).

(2E,6E)-farnesyl diphosphate contacts are provided by arginine 268, aspartate 305, aspartate 309, arginine 446, and aspartate 449. Positions 305 and 309 each coordinate Mg(2+). The short motif at 305–309 (DDIYD) is the DDXXD motif element. Residues aspartate 449 and glutamate 457 each coordinate Mg(2+).

The protein belongs to the terpene synthase family. It depends on Mg(2+) as a cofactor.

The catalysed reaction is (2E,6E)-farnesyl diphosphate = (-)-(E)-beta-caryophyllene + diphosphate. The protein operates within secondary metabolite biosynthesis; terpenoid biosynthesis. Functionally, sesquiterpene synthase that catalyzes the formation of sesquiterpenes and sesquiterpenoid alcohols. Converts farnesyl diphosphate (FPP) to beta-caryophyllene. Can use geranyl diphosphate (GPP) to produce myrcene, limonene and camphene. The polypeptide is Beta-caryophyllene synthase (Lavandula angustifolia (Lavender)).